The following is a 958-amino-acid chain: Probable transport protein MmpL1 (958 aa).

12 consecutive transmembrane segments (helical) span residues 19–39, 192–212, 216–236, 252–272, 295–315, 329–349, 377–397, 762–782, 791–811, 814–834, 868–888, and 906–927; these read ALSLPIILFWVALTIVVNVVA, SLHTITGISIAVIAIMLFIAY, SAALIMLLTVGLELLAVRGII, VNVLVALTIAASTDYIIFLVG, TAHVVLASGLTVAGAMYCLGF, AIGLVTVMLASLTLAPAIIAV, WPGPVLAATLLIALIGLLALP, YDVMIAVVASLCLIFIIMLGI, VIVGTVALSLGSAFGLSVLIW, ILHMPLHWLVLPMAIIVMLAV, VVTIAGLVFAFTMGSMVASDL, and TLVVRSYMTPALATLLGRWFWW.

This sequence belongs to the resistance-nodulation-cell division (RND) (TC 2.A.6) family. MmpL subfamily.

The protein localises to the cell membrane. The protein is Probable transport protein MmpL1 (mmpL1) of Mycobacterium tuberculosis (strain CDC 1551 / Oshkosh).